We begin with the raw amino-acid sequence, 498 residues long: MRIDPTTSGSGVSTLEKKKPGRVVQIIGPVLDVAFPPGKMPNIYNALVVQGRDSVGQPINVACEVQQLLGNNRVRAVAMSATDGLTRGMEVIDTGAPISVPVGGATLGRIFNVLGEPVDNLGPVDTSTTSPIHRSAPAFIQLDTKLSIFETGIKVVDLLAPYRRGGKIGLFGGAGVGKTVLIMELINNIAKAHGGVSVFGGVGERTREGNDLYMEMKESGVINEENIAESKVALVYGQMNEPPGARMRVGLTALTMAEYFRDVNEQDVLLFIDNIFRFVQAGSEVSALLGRMPSAVGYQPTLSTEMGSLQERITSTKEGSITSIQAVYVPADDLTDPAPATTFAHLDATTVLSRGLDAKGIYPAVDPLDSTSTMLQPRIVGEEHYETAQRVKQTLQRYKELQDIIAILGLDELSEEDRLLVARARKIERFLSQPFFVAEVFTGSPGKYVGLAETIRGFQLILSGELDGLPEQAFYLVGNIDEATAKAMNLEMESNLKK.

Residue 172 to 179 (GGAGVGKT) participates in ATP binding.

This sequence belongs to the ATPase alpha/beta chains family. As to quaternary structure, F-type ATPases have 2 components, CF(1) - the catalytic core - and CF(0) - the membrane proton channel. CF(1) has five subunits: alpha(3), beta(3), gamma(1), delta(1), epsilon(1). CF(0) has four main subunits: a(1), b(1), b'(1) and c(9-12).

The protein resides in the plastid. It is found in the chloroplast thylakoid membrane. The enzyme catalyses ATP + H2O + 4 H(+)(in) = ADP + phosphate + 5 H(+)(out). Produces ATP from ADP in the presence of a proton gradient across the membrane. The catalytic sites are hosted primarily by the beta subunits. In Nicotiana sp. (Tobacco), this protein is ATP synthase subunit beta, chloroplastic.